Reading from the N-terminus, the 120-residue chain is UPF0342 protein LAF_1331 (120 aa).

It belongs to the UPF0342 family.

This Limosilactobacillus fermentum (strain NBRC 3956 / LMG 18251) (Lactobacillus fermentum) protein is UPF0342 protein LAF_1331.